The following is a 626-amino-acid chain: Chaperone protein HtpG (626 aa).

The tract at residues 1-341 is a; substrate-binding; that stretch reads METKQFKAES…SEDLSLNISR (341 aa). The tract at residues 342–552 is b; sequence EILQHDRQLK…EGELSIEMEK (211 aa). Positions 553–626 are c; sequence VLNAMPNNQN…FTNNICKIMK (74 aa).

Belongs to the heat shock protein 90 family. In terms of assembly, homodimer.

It is found in the cytoplasm. In terms of biological role, molecular chaperone. Has ATPase activity. In Clostridium botulinum (strain 657 / Type Ba4), this protein is Chaperone protein HtpG.